A 406-amino-acid chain; its full sequence is Imidazolonepropionase (406 aa).

Residues H72 and H74 each coordinate Fe(3+). Residues H72 and H74 each contribute to the Zn(2+) site. The 4-imidazolone-5-propanoate site is built by R81, Y144, and H177. Y144 is an N-formimidoyl-L-glutamate binding site. H242 provides a ligand contact to Fe(3+). H242 is a Zn(2+) binding site. Q245 is a 4-imidazolone-5-propanoate binding site. D317 serves as a coordination point for Fe(3+). D317 is a Zn(2+) binding site. Positions 319 and 321 each coordinate N-formimidoyl-L-glutamate. A 4-imidazolone-5-propanoate-binding site is contributed by T322.

Belongs to the metallo-dependent hydrolases superfamily. HutI family. The cofactor is Zn(2+). Requires Fe(3+) as cofactor.

The protein localises to the cytoplasm. It carries out the reaction 4-imidazolone-5-propanoate + H2O = N-formimidoyl-L-glutamate. The protein operates within amino-acid degradation; L-histidine degradation into L-glutamate; N-formimidoyl-L-glutamate from L-histidine: step 3/3. In terms of biological role, catalyzes the hydrolytic cleavage of the carbon-nitrogen bond in imidazolone-5-propanoate to yield N-formimidoyl-L-glutamate. It is the third step in the universal histidine degradation pathway. The polypeptide is Imidazolonepropionase (Yersinia pseudotuberculosis serotype O:1b (strain IP 31758)).